The sequence spans 334 residues: Protein-glutamate methylesterase/protein-glutamine glutaminase 1 (334 aa).

Residues 2–120 form the Response regulatory domain; sequence NIGIVNDLPL…GAAGDTTKLL (119 aa). A 4-aspartylphosphate modification is found at D53. Residues 145-334 form the CheB-type methylesterase domain; it reads RAGGGPLIAI…AGELAALARI (190 aa). Catalysis depends on residues S157, H184, and D277.

It belongs to the CheB family. In terms of processing, phosphorylated by CheA. Phosphorylation of the N-terminal regulatory domain activates the methylesterase activity.

The protein resides in the cytoplasm. It carries out the reaction [protein]-L-glutamate 5-O-methyl ester + H2O = L-glutamyl-[protein] + methanol + H(+). The enzyme catalyses L-glutaminyl-[protein] + H2O = L-glutamyl-[protein] + NH4(+). Involved in chemotaxis. Part of a chemotaxis signal transduction system that modulates chemotaxis in response to various stimuli. Catalyzes the demethylation of specific methylglutamate residues introduced into the chemoreceptors (methyl-accepting chemotaxis proteins or MCP) by CheR. Also mediates the irreversible deamidation of specific glutamine residues to glutamic acid. This is Protein-glutamate methylesterase/protein-glutamine glutaminase 1 from Burkholderia lata (strain ATCC 17760 / DSM 23089 / LMG 22485 / NCIMB 9086 / R18194 / 383).